We begin with the raw amino-acid sequence, 563 residues long: Proton channel OTOP2 (563 aa).

A disordered region spans residues 1-20 (MSEELVPHPNESLPGPRASP). Transmembrane regions (helical) follow at residues 30–50 (LLSV…ISGG), 62–82 (VFAL…FYLL), 100–120 (PIWL…MDVF), 137–157 (ILHP…LWIS), 173–193 (LMFT…DESV), 242–262 (FYLY…LYVM), 290–310 (FFAG…VFIL), 325–345 (ALVI…LVSL), 373–393 (LMGA…AVVV), 403–423 (LNLS…VFII), 496–516 (DISL…AFGA), and 528–548 (FYGY…GIFY).

This sequence belongs to the otopetrin family. In terms of tissue distribution, expressed at higher level in stomach, testis and olfactory bulb.

The protein resides in the cell membrane. The enzyme catalyses H(+)(in) = H(+)(out). Its activity is regulated as follows. Actives at neutral and alkaline extracellular pH, acid extracellular pH appears to inhibit the channel. Insensitive to activation by Zn(2+). Proton-selective ion channel open at neutral pH. Actives at neutral and alkaline extracellular pH, likely participates in some alkali-related physiological activities. This chain is Proton channel OTOP2, found in Mus musculus (Mouse).